Consider the following 258-residue polypeptide: Regulatory protein RecX (258 aa).

It belongs to the RecX family.

It localises to the cytoplasm. Its function is as follows. Modulates RecA activity. In Streptococcus mutans serotype c (strain ATCC 700610 / UA159), this protein is Regulatory protein RecX.